The following is a 260-amino-acid chain: Global transcriptional regulator CodY (260 aa).

Residues 1–159 (MPNLLEKTRK…SSTVVGIQLL (159 aa)) are GAF domain. Positions 207 to 226 (ASVIADRIGITRSVIVNALR) form a DNA-binding region, H-T-H motif.

It belongs to the CodY family.

It localises to the cytoplasm. DNA-binding global transcriptional regulator which is involved in the adaptive response to starvation and acts by directly or indirectly controlling the expression of numerous genes in response to nutrient availability. During rapid exponential growth, CodY is highly active and represses genes whose products allow adaptation to nutrient depletion. This is Global transcriptional regulator CodY from Streptococcus pyogenes serotype M1.